We begin with the raw amino-acid sequence, 260 residues long: Small ribosomal subunit protein uS2 (260 aa).

This sequence belongs to the universal ribosomal protein uS2 family.

The chain is Small ribosomal subunit protein uS2 from Streptococcus gordonii (strain Challis / ATCC 35105 / BCRC 15272 / CH1 / DL1 / V288).